A 535-amino-acid chain; its full sequence is CTP synthase (535 aa).

One can recognise a Glutamine amidotransferase type-1 domain in the interval 300–535 (RIGIVGKYAP…LVSASYERSK (236 aa)). Residues cysteine 385, histidine 509, and glutamate 511 each act as for GATase activity in the active site.

It belongs to the CTP synthase family.

The catalysed reaction is UTP + L-glutamine + ATP + H2O = CTP + L-glutamate + ADP + phosphate + 2 H(+). Its pathway is pyrimidine metabolism; CTP biosynthesis via de novo pathway; CTP from UDP: step 2/2. Functionally, catalyzes the ATP-dependent amination of UTP to CTP with either L-glutamine or ammonia as the source of nitrogen. This chain is CTP synthase, found in Encephalitozoon cuniculi (strain GB-M1) (Microsporidian parasite).